A 428-amino-acid chain; its full sequence is Elongation factor 1-alpha (428 aa).

One can recognise a tr-type G domain in the interval 5-225 (KPILNVAFIG…DGFQPPEKPT (221 aa)). Residues 14-21 (GHVDAGKS) are G1. 14-21 (GHVDAGKS) is a binding site for GTP. Residue Ser-21 coordinates Mg(2+). Residues 70–74 (GVTID) are G2. The G3 stretch occupies residues 91–94 (DCPG). GTP is bound by residues 91-95 (DCPGH) and 149-152 (NKMD). Residues 149–152 (NKMD) are G4. The segment at 189-191 (ASL) is G5.

It belongs to the TRAFAC class translation factor GTPase superfamily. Classic translation factor GTPase family. EF-Tu/EF-1A subfamily.

It is found in the cytoplasm. It carries out the reaction GTP + H2O = GDP + phosphate + H(+). GTP hydrolase that promotes the GTP-dependent binding of aminoacyl-tRNA to the A-site of ribosomes during protein biosynthesis. The protein is Elongation factor 1-alpha of Methanococcus vannielii (strain ATCC 35089 / DSM 1224 / JCM 13029 / OCM 148 / SB).